The following is a 52-amino-acid chain: UPF0181 protein NTHI1697 (52 aa).

The protein belongs to the UPF0181 family.

The sequence is that of UPF0181 protein NTHI1697 from Haemophilus influenzae (strain 86-028NP).